Consider the following 156-residue polypeptide: Ribosomal RNA large subunit methyltransferase H (156 aa).

S-adenosyl-L-methionine is bound by residues Leu-73, Gly-104, and 123–128 (LGALTL).

The protein belongs to the RNA methyltransferase RlmH family. Homodimer.

Its subcellular location is the cytoplasm. The catalysed reaction is pseudouridine(1915) in 23S rRNA + S-adenosyl-L-methionine = N(3)-methylpseudouridine(1915) in 23S rRNA + S-adenosyl-L-homocysteine + H(+). In terms of biological role, specifically methylates the pseudouridine at position 1915 (m3Psi1915) in 23S rRNA. The polypeptide is Ribosomal RNA large subunit methyltransferase H (Dichelobacter nodosus (strain VCS1703A)).